A 348-amino-acid polypeptide reads, in one-letter code: EGF-like domain containing protein 1 (348 aa).

Positions 1–19 are cleaved as a signal peptide; that stretch reads MFYLSTFMTIVISLSLVSC. The EGF-like domain maps to 60-92; the sequence is TGSDCKVTCQNNGRCYDGNKCLCSSDYTGHLCE. 3 disulfides stabilise this stretch: C64/C74, C68/C80, and C82/C91. Positions 99 to 342 constitute a ZP domain; that stretch reads RCTLDGVVFE…PTCAAPAVSQ (244 aa).

In terms of tissue distribution, prismatic layer of shell (at protein level). Expressed primarily in the mantle with highest level in the mantle edge and lower level in the mantle pallium.

It localises to the secreted. This Margaritifera margaritifera (Freshwater pearl mussel) protein is EGF-like domain containing protein 1.